The primary structure comprises 156 residues: Nucleoredoxin-like protein 2 (156 aa).

Residues 9–147 (HLVTCKGATV…LACFQDWVEA (139 aa)) form the Thioredoxin domain.

It belongs to the nucleoredoxin family.

Functionally, may be involved in the maintenance of both the function and the viability of sensory neurons, including photoreceptors and olfactory neurons. The polypeptide is Nucleoredoxin-like protein 2 (NXNL2) (Homo sapiens (Human)).